A 491-amino-acid polypeptide reads, in one-letter code: Cobyric acid synthase (491 aa).

The GATase cobBQ-type domain maps to 246–432 (RKLIACPILP…VHGLLADAEL (187 aa)). Cys-328 acts as the Nucleophile in catalysis. Residue His-424 is part of the active site.

This sequence belongs to the CobB/CobQ family. CobQ subfamily.

Its pathway is cofactor biosynthesis; adenosylcobalamin biosynthesis. Functionally, catalyzes amidations at positions B, D, E, and G on adenosylcobyrinic A,C-diamide. NH(2) groups are provided by glutamine, and one molecule of ATP is hydrogenolyzed for each amidation. This is Cobyric acid synthase from Novosphingobium aromaticivorans (strain ATCC 700278 / DSM 12444 / CCUG 56034 / CIP 105152 / NBRC 16084 / F199).